The following is a 423-amino-acid chain: Histidine--tRNA ligase (423 aa).

Belongs to the class-II aminoacyl-tRNA synthetase family. As to quaternary structure, homodimer.

It is found in the cytoplasm. The catalysed reaction is tRNA(His) + L-histidine + ATP = L-histidyl-tRNA(His) + AMP + diphosphate + H(+). The protein is Histidine--tRNA ligase (hisS) of Haemophilus influenzae (strain ATCC 51907 / DSM 11121 / KW20 / Rd).